The following is a 339-amino-acid chain: DNA-directed RNA polymerase subunit alpha (339 aa).

The tract at residues 1–235 is alpha N-terminal domain (alpha-NTD); it reads MTIQKNWQEL…DQLNVFVNFE (235 aa). An alpha C-terminal domain (alpha-CTD) region spans residues 251–339; that stretch reads FNPAFLKKVD…ELAKRFEDHY (89 aa).

Belongs to the RNA polymerase alpha chain family. Homodimer. The RNAP catalytic core consists of 2 alpha, 1 beta, 1 beta' and 1 omega subunit. When a sigma factor is associated with the core the holoenzyme is formed, which can initiate transcription.

The catalysed reaction is RNA(n) + a ribonucleoside 5'-triphosphate = RNA(n+1) + diphosphate. In terms of biological role, DNA-dependent RNA polymerase catalyzes the transcription of DNA into RNA using the four ribonucleoside triphosphates as substrates. In Nitrobacter winogradskyi (strain ATCC 25391 / DSM 10237 / CIP 104748 / NCIMB 11846 / Nb-255), this protein is DNA-directed RNA polymerase subunit alpha.